The following is a 274-amino-acid chain: Large ribosomal subunit protein uL2cy (274 aa).

Disordered regions lie at residues M1–S20 and N224–K274.

Belongs to the universal ribosomal protein uL2 family. As to quaternary structure, part of the 50S ribosomal subunit.

The protein resides in the plastid. It localises to the chloroplast. This Populus alba (White poplar) protein is Large ribosomal subunit protein uL2cy (rpl2-B).